Here is a 476-residue protein sequence, read N- to C-terminus: Cysteine--tRNA ligase (476 aa).

Cys36 provides a ligand contact to Zn(2+). The 'HIGH' region signature appears at Pro38–Asn48. Zn(2+)-binding residues include Cys221, His246, and Glu250. Residues Lys278–Ser282 carry the 'KMSKS' region motif. Lys281 provides a ligand contact to ATP.

Belongs to the class-I aminoacyl-tRNA synthetase family. As to quaternary structure, monomer. It depends on Zn(2+) as a cofactor.

Its subcellular location is the cytoplasm. The enzyme catalyses tRNA(Cys) + L-cysteine + ATP = L-cysteinyl-tRNA(Cys) + AMP + diphosphate. The chain is Cysteine--tRNA ligase from Chlamydia abortus (strain DSM 27085 / S26/3) (Chlamydophila abortus).